Consider the following 638-residue polypeptide: Epithelial sodium channel subunit beta (638 aa).

At 1–50 (MPVKKYLLKCLHRLQKGPGYTYKELLVWYCNNTNTHGPKRIICEGPKKKA) the chain is on the cytoplasmic side. The chain crosses the membrane as a helical span at residues 51–71 (MWFLLTLLFACLVCWQWGVFI). The Extracellular portion of the chain corresponds to 72–530 (QTYLSWEVSV…GGQFGFWMGG (459 aa)). Cystine bridges form between Cys98–Cys270, Cys182–Cys187, Cys194–Cys201, Cys247–Cys254, Cys359–Cys446, Cys384–Cys442, Cys388–Cys438, Cys397–Cys424, and Cys399–Cys413. N-linked (GlcNAc...) asparagine glycans are attached at residues Asn135 and Asn141. The helical transmembrane segment at 531-551 (SVLCLIEFGEIIIDFIWITVI) threads the bilayer. The Cytoplasmic segment spans residues 552 to 638 (KLVASCKGLR…MESDSEVEAI (87 aa)). The disordered stretch occupies residues 598–620 (NAEVYPDQQTLPIPGTPPPNYDS). Positions 614 to 618 (PPPNY) match the PY motif; recruits WW domain-containing proteins and is thereby required for ubiquitination and inhibition of the channel by NEDD4 and NEDD4L motif. Phosphoserine is present on residues Ser631 and Ser633.

The protein belongs to the amiloride-sensitive sodium channel (TC 1.A.6) family. SCNN1B subfamily. As to quaternary structure, component of the heterotrimeric epithelial sodium channel (ENaC) composed of an alpha/SCNN1A, a beta/SCNN1B and a gamma/SCNN1G subunit. Interacts with WWP1 (via WW domains). Interacts with WWP2 (via WW domains). Interacts with the full-length immature form of PCSK9 (pro-PCSK9). Interacts (N-glycosylated) with BPIFA1; the interaction is direct and inhibits the proteolytic processing of SCNN1A and SCNN1G and the activation of ENaC. In terms of processing, ubiquitinated. Can be ubiquitinated at multiple sites and undergo monoubiquitination and polyubiquitination. Ubiquitination by NEDD4 or NEDD4L inhibits the ENaC channel through endocytosis, intracellular retention and degradation of its individual subunits. However, some studies could not confirm the ubiquitination of this subunit of the ENaC. N-glycosylated. N-glycosylation is required for interaction with BPIFA1. Post-translationally, phosphorylated on serine and threonine residues. Aldosterone and insulin increase the basal level of phosphorylation. As to expression, expressed in lung and epididymis. In the caput region of the epididymis, expressed at the luminal and basolateral surfaces of the ducts and in the smooth muscle coat. In the caudal region of the epididymis, expressed along the luminal border but not continuously, in the smooth muscle coat, in the interstitial muscle tissue and in sperm in the caudal lumen.

It is found in the apical cell membrane. It localises to the cytoplasmic vesicle membrane. The catalysed reaction is Na(+)(in) = Na(+)(out). With respect to regulation, originally identified and characterized by its inhibition by the diuretic drug amiloride. Its function is as follows. This is one of the three pore-forming subunits of the heterotrimeric epithelial sodium channel (ENaC), a critical regulator of sodium balance and fluid homeostasis. ENaC operates in epithelial tissues, where it mediates the electrodiffusion of sodium ions from extracellular fluid through the apical membrane of cells, with water following osmotically. It plays a key role in maintaining sodium homeostasis through electrogenic sodium reabsorption in the kidneys. This subunit is not essential for ENaC function in airway surface liquid homeostasis and proper mucus clearance. The polypeptide is Epithelial sodium channel subunit beta (Rattus norvegicus (Rat)).